A 1357-amino-acid polypeptide reads, in one-letter code: DNA-directed RNA polymerase subunit beta (1357 aa).

It belongs to the RNA polymerase beta chain family. The RNAP catalytic core consists of 2 alpha, 1 beta, 1 beta' and 1 omega subunit. When a sigma factor is associated with the core the holoenzyme is formed, which can initiate transcription.

It catalyses the reaction RNA(n) + a ribonucleoside 5'-triphosphate = RNA(n+1) + diphosphate. Functionally, DNA-dependent RNA polymerase catalyzes the transcription of DNA into RNA using the four ribonucleoside triphosphates as substrates. This chain is DNA-directed RNA polymerase subunit beta, found in Nitrosospira multiformis (strain ATCC 25196 / NCIMB 11849 / C 71).